Here is a 328-residue protein sequence, read N- to C-terminus: Tetraacyldisaccharide 4'-kinase (328 aa).

55–62 (TAGGNGKT) is an ATP binding site.

It belongs to the LpxK family.

It carries out the reaction a lipid A disaccharide + ATP = a lipid IVA + ADP + H(+). It participates in glycolipid biosynthesis; lipid IV(A) biosynthesis; lipid IV(A) from (3R)-3-hydroxytetradecanoyl-[acyl-carrier-protein] and UDP-N-acetyl-alpha-D-glucosamine: step 6/6. Its function is as follows. Transfers the gamma-phosphate of ATP to the 4'-position of a tetraacyldisaccharide 1-phosphate intermediate (termed DS-1-P) to form tetraacyldisaccharide 1,4'-bis-phosphate (lipid IVA). This is Tetraacyldisaccharide 4'-kinase from Escherichia coli O157:H7.